The sequence spans 108 residues: MFFQTTIVAALASLAVATPLALRTDSRCNTESVKCCNKSEDAETFKKSASAALIPIKIGDITGEVYSECSPIVGLIGGSSCSAQTVCCDNAKFNGLVNIGCTPINVAL.

The first 17 residues, 1-17 (MFFQTTIVAALASLAVA), serve as a signal peptide directing secretion. 4 disulfide bridges follow: Cys-28-Cys-87, Cys-35-Cys-81, Cys-36-Cys-69, and Cys-88-Cys-101. N-linked (GlcNAc...) asparagine glycosylation occurs at Asn-37.

This sequence belongs to the fungal hydrophobin family. In terms of assembly, self-assembles to form functional amyloid fibrils called rodlets. Self-assembly into fibrillar rodlets occurs spontaneously at hydrophobic:hydrophilic interfaces and the rodlets further associate laterally to form amphipathic monolayers.

The protein resides in the secreted. The protein localises to the cell wall. Functionally, aerial growth, conidiation, and dispersal of filamentous fungi in the environment rely upon a capability of their secreting small amphipathic proteins called hydrophobins (HPBs) with low sequence identity. Class I can self-assemble into an outermost layer of rodlet bundles on aerial cell surfaces, conferring cellular hydrophobicity that supports fungal growth, development and dispersal; whereas Class II form highly ordered films at water-air interfaces through intermolecular interactions but contribute nothing to the rodlet structure. Vmh3 is a class I hydrophobin that is essential for the maintenance of the surface hydrophobicity of the mycelium and might be involved in the development of fruiting bodies. Plays an important role in hyphal resistance against environmental stress. Necessary for the efficient biodegradation of lignin. This Pleurotus ostreatus (strain PC15) (Oyster mushroom) protein is Class I hydrophobin 3.